A 176-amino-acid chain; its full sequence is Peptidyl-prolyl cis-trans isomerase CYP19-3 (176 aa).

The 164-residue stretch at 7–170 (FFDILIGKMK…ERVVIEDCGE (164 aa)) folds into the PPIase cyclophilin-type domain.

This sequence belongs to the cyclophilin-type PPIase family. As to expression, ubiquitous, with highest levels in flowers and lowest levels in roots.

It localises to the cytoplasm. It catalyses the reaction [protein]-peptidylproline (omega=180) = [protein]-peptidylproline (omega=0). Its activity is regulated as follows. Binds cyclosporin A (CsA). CsA mediates some of its effects via an inhibitory action on PPIase. Its function is as follows. PPIases accelerate the folding of proteins. It catalyzes the cis-trans isomerization of proline imidic peptide bonds in oligopeptides. The chain is Peptidyl-prolyl cis-trans isomerase CYP19-3 (CYP19-3) from Arabidopsis thaliana (Mouse-ear cress).